The sequence spans 180 residues: Shikimate kinase (180 aa).

ATP is bound at residue 14-19 (GAGKSS). Position 18 (S18) interacts with Mg(2+). 3 residues coordinate substrate: D36, R60, and G82. R120 contributes to the ATP binding site. Residue R139 coordinates substrate.

It belongs to the shikimate kinase family. Monomer. The cofactor is Mg(2+).

The protein resides in the cytoplasm. It carries out the reaction shikimate + ATP = 3-phosphoshikimate + ADP + H(+). It functions in the pathway metabolic intermediate biosynthesis; chorismate biosynthesis; chorismate from D-erythrose 4-phosphate and phosphoenolpyruvate: step 5/7. Catalyzes the specific phosphorylation of the 3-hydroxyl group of shikimic acid using ATP as a cosubstrate. The polypeptide is Shikimate kinase (Xylella fastidiosa (strain M12)).